Here is a 268-residue protein sequence, read N- to C-terminus: MTIKVGVTGVCGRMGRMLVEATHKAQGCMLGAASEYPGHTLIGADAGELAGVGKLGVLVGGDAETTFRDADVVIDFSVVEATLAHLRLALAQGTPIVIGTTGFSAAERQQIALAAERIPVVFAPNYAVGVNLLFKIAAEVAAVLGGEYDIEIVEAHHRHKVDAPSGTALGLGQAIAEAVERNLDEVAIYGRQGQTGARDPQTIGFSTIRGGDVVGDHTAMFMTDGERLELTHRASSRMTFAKGAVRAAKWVVEQKPGLYDMRDILGFK.

Residues 9–14 (GVCGRM), Glu-35, 99–101 (GTT), and 123–126 (APNY) each bind NAD(+). Catalysis depends on His-156, which acts as the Proton donor/acceptor. A (S)-2,3,4,5-tetrahydrodipicolinate-binding site is contributed by His-157. The Proton donor role is filled by Lys-160. 166 to 167 (GT) contributes to the (S)-2,3,4,5-tetrahydrodipicolinate binding site.

The protein belongs to the DapB family.

The protein localises to the cytoplasm. The enzyme catalyses (S)-2,3,4,5-tetrahydrodipicolinate + NAD(+) + H2O = (2S,4S)-4-hydroxy-2,3,4,5-tetrahydrodipicolinate + NADH + H(+). It carries out the reaction (S)-2,3,4,5-tetrahydrodipicolinate + NADP(+) + H2O = (2S,4S)-4-hydroxy-2,3,4,5-tetrahydrodipicolinate + NADPH + H(+). Its pathway is amino-acid biosynthesis; L-lysine biosynthesis via DAP pathway; (S)-tetrahydrodipicolinate from L-aspartate: step 4/4. In terms of biological role, catalyzes the conversion of 4-hydroxy-tetrahydrodipicolinate (HTPA) to tetrahydrodipicolinate. This chain is 4-hydroxy-tetrahydrodipicolinate reductase, found in Magnetococcus marinus (strain ATCC BAA-1437 / JCM 17883 / MC-1).